Here is a 605-residue protein sequence, read N- to C-terminus: UvrABC system protein C (605 aa).

The 79-residue stretch at 14-92 (QSCGVYKMIG…IKSLKPSYNI (79 aa)) folds into the GIY-YIG domain. Positions 202 to 237 (KEVQRQLFSTMEKCSREMNYELAAVYRDRLKFLQQI) constitute a UVR domain.

It belongs to the UvrC family. Interacts with UvrB in an incision complex.

The protein localises to the cytoplasm. The UvrABC repair system catalyzes the recognition and processing of DNA lesions. UvrC both incises the 5' and 3' sides of the lesion. The N-terminal half is responsible for the 3' incision and the C-terminal half is responsible for the 5' incision. This is UvrABC system protein C from Wolbachia pipientis subsp. Culex pipiens (strain wPip).